We begin with the raw amino-acid sequence, 253 residues long: Imidazole glycerol phosphate synthase subunit HisF (253 aa).

Active-site residues include Asp-11 and Asp-130.

Belongs to the HisA/HisF family. In terms of assembly, heterodimer of HisH and HisF.

It is found in the cytoplasm. It catalyses the reaction 5-[(5-phospho-1-deoxy-D-ribulos-1-ylimino)methylamino]-1-(5-phospho-beta-D-ribosyl)imidazole-4-carboxamide + L-glutamine = D-erythro-1-(imidazol-4-yl)glycerol 3-phosphate + 5-amino-1-(5-phospho-beta-D-ribosyl)imidazole-4-carboxamide + L-glutamate + H(+). The protein operates within amino-acid biosynthesis; L-histidine biosynthesis; L-histidine from 5-phospho-alpha-D-ribose 1-diphosphate: step 5/9. IGPS catalyzes the conversion of PRFAR and glutamine to IGP, AICAR and glutamate. The HisF subunit catalyzes the cyclization activity that produces IGP and AICAR from PRFAR using the ammonia provided by the HisH subunit. This Ruminiclostridium cellulolyticum (strain ATCC 35319 / DSM 5812 / JCM 6584 / H10) (Clostridium cellulolyticum) protein is Imidazole glycerol phosphate synthase subunit HisF.